Reading from the N-terminus, the 407-residue chain is Putative F-box protein At2g16220 (407 aa).

Residues 1–45 (MNSHFLTNDLILEVLSRLPLKSVARFHCVSKRWASMFGSPYFKEL) enclose the F-box domain. The disordered stretch occupies residues 385-407 (PPSVQPEYDESDSESEEDREIII). The segment covering 391-407 (EYDESDSESEEDREIII) has biased composition (acidic residues).

The sequence is that of Putative F-box protein At2g16220 from Arabidopsis thaliana (Mouse-ear cress).